Consider the following 136-residue polypeptide: Purkinje cell protein 2 homolog (136 aa).

2 disordered regions span residues 1–64 (MMDQ…PEMD) and 86–136 (SSLP…TQAP). The GoLoco 1 domain maps to 23-45 (QEGFFNLLSHVQGDRMEGQRCSL). The span at 49–59 (PGQTTKSQSDP) shows a compositional bias: polar residues. A GoLoco 2 domain is found at 63–85 (MDSLMDMLASTQGRRMDDQRVTV). Over residues 107 to 117 (LSPQPLLTPQD) the composition is skewed to polar residues. Phosphoserine is present on Ser127.

In terms of biological role, may function as a cell-type specific modulator for G protein-mediated cell signaling. This chain is Purkinje cell protein 2 homolog (PCP2), found in Homo sapiens (Human).